Reading from the N-terminus, the 526-residue chain is Acid-sensing ion channel 1 (526 aa).

Residues 1-49 (MELKTEEEEVGGVQPVSIQAFASSSTLHGLAHIFSYERLSLKRALWALC) lie on the Cytoplasmic side of the membrane. Residues 50 to 66 (FLGSLAVLLCVCTERVQ) traverse the membrane as a helical segment. The Extracellular portion of the chain corresponds to 67-425 (YYFCYHHVTK…ETIEQKKAYE (359 aa)). Disulfide bonds link cysteine 93–cysteine 194, cysteine 172–cysteine 179, cysteine 290–cysteine 365, cysteine 308–cysteine 361, cysteine 312–cysteine 359, cysteine 321–cysteine 343, and cysteine 323–cysteine 335. N-linked (GlcNAc...) asparagine glycosylation is found at asparagine 366 and asparagine 393. Residues 426 to 456 (IAGLLGDIGGQMGLFIGASILTVLELFDYAY) traverse the membrane as a discontinuously helical segment. A GAS motif; ion selectivity filter motif is present at residues 442-444 (GAS). Over 457–526 (EVIKHRLCRR…ARGTFEDFTC (70 aa)) the chain is Cytoplasmic. A phosphoserine mark is found at serine 477 and serine 497.

The protein belongs to the amiloride-sensitive sodium channel (TC 1.A.6) family. ASIC1 subfamily. In terms of assembly, homotrimer. Heterotrimer; with other ASIC proteins producing channel with different properties. Interacts with PICK1; regulates ASIC1 clustering in membranes. Interacts with STOM; alters heterotrimeric ASIC channels activity. Post-translationally, pH-gating could be regulated by serine proteases. Phosphorylation by PKA regulates interaction with PICK1 and subcellular localization. Phosphorylation by PKC may regulate the channel. In terms of tissue distribution, expressed in dorsal root ganglia and sciatic nerve (at protein level). Widely distributed throughout the brain. Expressed in olfactory bulb, neo and allocortical regions, dentate granule cells, pyramidal cells of CA1-CA3 subfields of the hippocampal formation, habenula, basolateral amygdaloid nuclei, and in the Purkinje and granule cells of the cerebellum. Diffusely detected over most other regions of the basal ganglia, including thalamic nuclei, substantia nigra, striatum and globus pallidus, hypothalamus, midbrain, pons, medulla and choroid plexus. As to expression, expressed only in dorsal root ganglion (DRG). Expressed exclusively in trigeminal ganglion and dorsal root ganglion.

Its subcellular location is the cell membrane. The protein localises to the postsynaptic cell membrane. The protein resides in the cell projection. It is found in the dendrite. It carries out the reaction Na(+)(in) = Na(+)(out). The catalysed reaction is Li(+)(in) = Li(+)(out). It catalyses the reaction K(+)(in) = K(+)(out). The enzyme catalyses Ca(2+)(in) = Ca(2+)(out). It carries out the reaction H(+)(in) = H(+)(out). Inhibited by the diuretic drug amiloride. External calcium is required to potentiate proton activation of ASIC1 at physiological concentrations, but at higher, non-physiological concentrations, it inhibits activation. Also potentiated by other multivalent cations like Mg(2+), Ba(2+). Activated by FMRFamide-related neuropeptides. Inhibited by anti-inflammatory drugs like salicylic acid. The spider venom psalmotoxin-1 specifically inhibits the ASIC1 homotrimer. The snake venom mambalgin-1, mambalgin-2 and mambalgin-3 inhibit the homotrimer of Asic1a (ASIC1 isoform 1). The snake venom mambalgin-1 and mambalgin-2 inhibit heterotrimers of Asic1a-Asic1b (ASIC1 isoform 1-ASIC1 isoform 3). Heterotrimer of Asic1a-Asic2a is inhibited by the snake venom mambalgin-1, mambalgin-2 and mambalgin-3. Heterotrimer of Asic1a-Asic2b is inhibited by the snake venom mambalgin-1 and mambalgin-2. The spider venom Pi-theraphotoxin-Hm3a inhibits the homotrimer of Asic1a (ASIC1 isoform 1). The spider venom Pi-theraphotoxin-Hm3a inhibits heterotrimers of Asic1a-Asic1b (ASIC1 isoform 1-ASIC1 isoform 3). The spider venom Pi-hexatoxin-Hi1a inhibits the ASIC1 homotrimer. With respect to regulation, not inhibited by extracellular calcium. Its function is as follows. Forms voltage-independent, pH-gated trimeric sodium channels that act as postsynaptic excitatory receptors in the nervous system, playing a crucial role in regulating synaptic plasticity, learning, and memory. Upon extracellular pH drop this channel elicits transient, fast activating, and completely desensitizing inward currents. Displays high selectivity for sodium ions but can also permit the permeation of other cations. Regulates more or less directly intracellular calcium concentration and CaMKII phosphorylation, and thereby the density of dendritic spines. Modulates neuronal activity in the circuits underlying innate fear. Functionally, permeable to other cations including calcium, lithium and potassium. In terms of biological role, pH activation and steady-state inactivation are shifted to more acidic values. Forms channels that are not permeable to calcium as it discrimates stronger between monovalent cations. Has no pH-gated sodium channel activity per se but can associate with other ASICs and regulate their pH-sensitivity. This chain is Acid-sensing ion channel 1, found in Rattus norvegicus (Rat).